A 208-amino-acid polypeptide reads, in one-letter code: MVFDELITEFDRGLRSIAGVSRMSRPVPKPAAAAPAELSAAERKHAAGLMRVNHVGEVCAQALYQAQKLTTSSAGLKEMFEHAAREEEDHLAWTAHRLKDLDSRPSLLNPLWYAGALAIGVVAGRLGDKVSLGFMAETERQVESHLDGHLSELPAADVESRAIVEQMRADEVKHGKSATDAGGIELPMPARMLMRAASKVMTSTAYYL.

Fe cation is bound by residues E57, E87, H90, E139, E171, and H174.

This sequence belongs to the COQ7 family. The cofactor is Fe cation.

Its subcellular location is the cell membrane. It catalyses the reaction a 5-methoxy-2-methyl-3-(all-trans-polyprenyl)benzene-1,4-diol + AH2 + O2 = a 3-demethylubiquinol + A + H2O. The protein operates within cofactor biosynthesis; ubiquinone biosynthesis. In terms of biological role, catalyzes the hydroxylation of 2-nonaprenyl-3-methyl-6-methoxy-1,4-benzoquinol during ubiquinone biosynthesis. This chain is 3-demethoxyubiquinol 3-hydroxylase, found in Burkholderia pseudomallei (strain 668).